A 209-amino-acid chain; its full sequence is Octanoyltransferase (209 aa).

The region spanning 30–209 is the BPL/LPL catalytic domain; that stretch reads VNEPEIVYLV…IQTEFNKIFT (180 aa). Substrate is bound by residues 69 to 76, 143 to 145, and 156 to 158; these read RGGKFTFH, AIG, and GVA. The active-site Acyl-thioester intermediate is cysteine 174.

This sequence belongs to the LipB family.

Its subcellular location is the cytoplasm. It catalyses the reaction octanoyl-[ACP] + L-lysyl-[protein] = N(6)-octanoyl-L-lysyl-[protein] + holo-[ACP] + H(+). The protein operates within protein modification; protein lipoylation via endogenous pathway; protein N(6)-(lipoyl)lysine from octanoyl-[acyl-carrier-protein]: step 1/2. Functionally, catalyzes the transfer of endogenously produced octanoic acid from octanoyl-acyl-carrier-protein onto the lipoyl domains of lipoate-dependent enzymes. Lipoyl-ACP can also act as a substrate although octanoyl-ACP is likely to be the physiological substrate. This is Octanoyltransferase from Rickettsia canadensis (strain McKiel).